The primary structure comprises 253 residues: Probable transcriptional regulatory protein Mmar10_2433 (253 aa).

Belongs to the TACO1 family.

The protein localises to the cytoplasm. This is Probable transcriptional regulatory protein Mmar10_2433 from Maricaulis maris (strain MCS10) (Caulobacter maris).